A 227-amino-acid chain; its full sequence is Cytidylate kinase (227 aa).

Residue 12-20 (GPSGAGKGT) coordinates ATP.

The protein belongs to the cytidylate kinase family. Type 1 subfamily.

The protein localises to the cytoplasm. The catalysed reaction is CMP + ATP = CDP + ADP. It catalyses the reaction dCMP + ATP = dCDP + ADP. The protein is Cytidylate kinase of Salmonella paratyphi B (strain ATCC BAA-1250 / SPB7).